We begin with the raw amino-acid sequence, 728 residues long: 1,4-alpha-glucan branching enzyme GlgB (728 aa).

Asp-405 serves as the catalytic Nucleophile. The Proton donor role is filled by Glu-458.

The protein belongs to the glycosyl hydrolase 13 family. GlgB subfamily. As to quaternary structure, monomer.

The enzyme catalyses Transfers a segment of a (1-&gt;4)-alpha-D-glucan chain to a primary hydroxy group in a similar glucan chain.. It participates in glycan biosynthesis; glycogen biosynthesis. In terms of biological role, catalyzes the formation of the alpha-1,6-glucosidic linkages in glycogen by scission of a 1,4-alpha-linked oligosaccharide from growing alpha-1,4-glucan chains and the subsequent attachment of the oligosaccharide to the alpha-1,6 position. The chain is 1,4-alpha-glucan branching enzyme GlgB from Salmonella paratyphi B (strain ATCC BAA-1250 / SPB7).